A 257-amino-acid polypeptide reads, in one-letter code: Thiazole synthase (257 aa).

Lys97 (schiff-base intermediate with DXP) is an active-site residue. Residues Gly158, Ala184 to Gly185, and Asn206 to Thr207 each bind 1-deoxy-D-xylulose 5-phosphate.

This sequence belongs to the ThiG family. As to quaternary structure, homotetramer. Forms heterodimers with either ThiH or ThiS.

Its subcellular location is the cytoplasm. It carries out the reaction [ThiS sulfur-carrier protein]-C-terminal-Gly-aminoethanethioate + 2-iminoacetate + 1-deoxy-D-xylulose 5-phosphate = [ThiS sulfur-carrier protein]-C-terminal Gly-Gly + 2-[(2R,5Z)-2-carboxy-4-methylthiazol-5(2H)-ylidene]ethyl phosphate + 2 H2O + H(+). The protein operates within cofactor biosynthesis; thiamine diphosphate biosynthesis. Its function is as follows. Catalyzes the rearrangement of 1-deoxy-D-xylulose 5-phosphate (DXP) to produce the thiazole phosphate moiety of thiamine. Sulfur is provided by the thiocarboxylate moiety of the carrier protein ThiS. In vitro, sulfur can be provided by H(2)S. This is Thiazole synthase from Phocaeicola vulgatus (strain ATCC 8482 / DSM 1447 / JCM 5826 / CCUG 4940 / NBRC 14291 / NCTC 11154) (Bacteroides vulgatus).